The following is a 65-amino-acid chain: MPKIKTVRGAAKRFKKTASGGFKRKQSHLRHILTKKTTKRKRHLCHKSMVAKADQVLVVACLPYA.

Residues 1-26 form a disordered region; that stretch reads MPKIKTVRGAAKRFKKTASGGFKRKQ. Residues 10 to 26 are compositionally biased toward basic residues; it reads AAKRFKKTASGGFKRKQ.

It belongs to the bacterial ribosomal protein bL35 family.

The sequence is that of Large ribosomal subunit protein bL35 from Haemophilus ducreyi (strain 35000HP / ATCC 700724).